We begin with the raw amino-acid sequence, 96 residues long: Nucleoid-associated protein TC_0612 (96 aa).

It belongs to the YbaB/EbfC family. Homodimer.

The protein resides in the cytoplasm. Its subcellular location is the nucleoid. Its function is as follows. Binds to DNA and alters its conformation. May be involved in regulation of gene expression, nucleoid organization and DNA protection. The chain is Nucleoid-associated protein TC_0612 from Chlamydia muridarum (strain MoPn / Nigg).